Reading from the N-terminus, the 430-residue chain is Histidine--tRNA ligase (430 aa).

Belongs to the class-II aminoacyl-tRNA synthetase family. As to quaternary structure, homodimer.

The protein resides in the cytoplasm. The enzyme catalyses tRNA(His) + L-histidine + ATP = L-histidyl-tRNA(His) + AMP + diphosphate + H(+). The polypeptide is Histidine--tRNA ligase (Lactococcus lactis subsp. cremoris (strain MG1363)).